Here is a 226-residue protein sequence, read N- to C-terminus: UPF0758 protein SUB0843 (226 aa).

In terms of domain architecture, MPN spans 103 to 225; that stretch reads QILSSYQVAK…YYSFREKSDI (123 aa). Positions 174, 176, and 187 each coordinate Zn(2+). The short motif at 174–187 is the JAMM motif element; it reads HNHPSGLTNPSEND.

Belongs to the UPF0758 family.

The polypeptide is UPF0758 protein SUB0843 (Streptococcus uberis (strain ATCC BAA-854 / 0140J)).